Here is a 472-residue protein sequence, read N- to C-terminus: ATP synthase subunit beta (472 aa).

Residue 155–162 (GGAGVGKT) participates in ATP binding.

This sequence belongs to the ATPase alpha/beta chains family. As to quaternary structure, F-type ATPases have 2 components, CF(1) - the catalytic core - and CF(0) - the membrane proton channel. CF(1) has five subunits: alpha(3), beta(3), gamma(1), delta(1), epsilon(1). CF(0) has three main subunits: a(1), b(2) and c(9-12). The alpha and beta chains form an alternating ring which encloses part of the gamma chain. CF(1) is attached to CF(0) by a central stalk formed by the gamma and epsilon chains, while a peripheral stalk is formed by the delta and b chains.

It is found in the cell membrane. The catalysed reaction is ATP + H2O + 4 H(+)(in) = ADP + phosphate + 5 H(+)(out). Its function is as follows. Produces ATP from ADP in the presence of a proton gradient across the membrane. The catalytic sites are hosted primarily by the beta subunits. The protein is ATP synthase subunit beta of Fervidobacterium islandicum.